The following is a 1407-amino-acid chain: DNA-directed RNA polymerase subunit beta' (1407 aa).

The Zn(2+) site is built by cysteine 70, cysteine 72, cysteine 85, and cysteine 88. 3 residues coordinate Mg(2+): aspartate 460, aspartate 462, and aspartate 464. Positions 814, 888, 895, and 898 each coordinate Zn(2+).

The protein belongs to the RNA polymerase beta' chain family. As to quaternary structure, the RNAP catalytic core consists of 2 alpha, 1 beta, 1 beta' and 1 omega subunit. When a sigma factor is associated with the core the holoenzyme is formed, which can initiate transcription. It depends on Mg(2+) as a cofactor. Zn(2+) is required as a cofactor.

The catalysed reaction is RNA(n) + a ribonucleoside 5'-triphosphate = RNA(n+1) + diphosphate. Functionally, DNA-dependent RNA polymerase catalyzes the transcription of DNA into RNA using the four ribonucleoside triphosphates as substrates. This is DNA-directed RNA polymerase subunit beta' from Salmonella choleraesuis (strain SC-B67).